The chain runs to 338 residues: Lipoate-protein ligase A (338 aa).

One can recognise a BPL/LPL catalytic domain in the interval 29–216 (PATQRVLFLW…AFFSHYGERV (188 aa)). Residues R71, 76 to 79 (GAVF), and K134 each bind ATP. A (R)-lipoate-binding site is contributed by K134.

It belongs to the LplA family. In terms of assembly, monomer.

Its subcellular location is the cytoplasm. The enzyme catalyses L-lysyl-[lipoyl-carrier protein] + (R)-lipoate + ATP = N(6)-[(R)-lipoyl]-L-lysyl-[lipoyl-carrier protein] + AMP + diphosphate + H(+). Its pathway is protein modification; protein lipoylation via exogenous pathway; protein N(6)-(lipoyl)lysine from lipoate: step 1/2. It functions in the pathway protein modification; protein lipoylation via exogenous pathway; protein N(6)-(lipoyl)lysine from lipoate: step 2/2. Its function is as follows. Catalyzes both the ATP-dependent activation of exogenously supplied lipoate to lipoyl-AMP and the transfer of the activated lipoyl onto the lipoyl domains of lipoate-dependent enzymes. The polypeptide is Lipoate-protein ligase A (Klebsiella pneumoniae subsp. pneumoniae (strain ATCC 700721 / MGH 78578)).